Here is an 826-residue protein sequence, read N- to C-terminus: Receptor-like protein 18 (826 aa).

Over 1–780 the chain is Extracellular; that stretch reads MRCQVWNVIE…EEDEEEVISW (780 aa). LRR repeat units lie at residues 5–31, 32–54, 55–79, 81–103, 104–127, 128–150, and 151–177; these read VWNV…IFSL, QNLR…SLGN, FSSL…LGNL, HLTS…LGNL, SHLT…LGNL, SHLT…SFEN, and LSHL…SFNQ. 2 N-linked (GlcNAc...) asparagine glycosylation sites follow: N12 and N54. N102, N126, and N150 each carry an N-linked (GlcNAc...) asparagine glycan. Residues 178 to 198 form an LRR 8; degenerate repeat; sequence LVSLAVEENEFTGNFLLILLN. Residues N198, N201, and N219 are each glycosylated (N-linked (GlcNAc...) asparagine). LRR repeat units follow at residues 199-223, 225-247, 248-271, 273-294, 296-318, 319-343, 345-368, 382-405, 406-429, 430-452, 455-478, 479-500, 501-524, 525-550, 552-570, 571-594, 637-661, 662-685, 686-709, and 711-734; these read LTNL…MSSL, NLVL…LLNI, PSLS…NISS, LSDL…ISKL, NLYT…IFSD, LKLL…TFLS, FKSL…SVSN, PLLL…LRTQ, QTME…LWTL, PTLD…MVPS, QPSM…FICA, FTLQ…ENIS, ESLK…LVRI, SSLE…SLEE, QVLV…QTRF, PNLR…FFVN, LKIF…IGLL, KELH…MGKL, RELE…LGDL, and YLAY…QFLT. A glycan (N-linked (GlcNAc...) asparagine) is linked at N268. Residues N312, N331, N362, and N389 are each glycosylated (N-linked (GlcNAc...) asparagine). 4 N-linked (GlcNAc...) asparagine glycosylation sites follow: N436, N439, N467, and N498. N538 is a glycosylation site (N-linked (GlcNAc...) asparagine). Residues N584 and N594 are each glycosylated (N-linked (GlcNAc...) asparagine). N-linked (GlcNAc...) asparagine glycosylation occurs at N668. Residues N716 and N736 are each glycosylated (N-linked (GlcNAc...) asparagine). The chain crosses the membrane as a helical span at residues 781 to 801; it reads IAATIGFIPGIAFGLMMGYIL. At 802-826 the chain is on the cytoplasmic side; sequence VCYKPEWFMNVFGKNKSRSTSSTTR.

Belongs to the RLP family.

It localises to the cell membrane. The sequence is that of Receptor-like protein 18 from Arabidopsis thaliana (Mouse-ear cress).